We begin with the raw amino-acid sequence, 538 residues long: Nucleobase-ascorbate transporter 7 (538 aa).

A compositionally biased stretch (gly residues) spans 1 to 11 (MAGGGGGGGGV). The tract at residues 1-20 (MAGGGGGGGGVAPPLKHDGL) is disordered. 12 helical membrane passes run 45–65 (AILL…LIPT), 81–101 (MVQT…FFGT), 103–123 (LPAV…IILA), 143–163 (IQGA…SGLW), 166–186 (VVRL…GFGL), 191–211 (FPLL…LLLF), 229–249 (FAVI…TVGG), 295–315 (FAMM…YIVV), 372–394 (VVQI…AIFA), 398–420 (APVV…LSLL), 432–452 (FILG…NQYT), and 471–491 (INVP…FLDV).

The protein belongs to the nucleobase:cation symporter-2 (NCS2) (TC 2.A.40) family. In terms of tissue distribution, expressed exclusively in ovules.

The protein localises to the cell membrane. In Arabidopsis thaliana (Mouse-ear cress), this protein is Nucleobase-ascorbate transporter 7 (NAT7).